A 95-amino-acid polypeptide reads, in one-letter code: Microcin E492 immunity protein (95 aa).

A run of 3 helical transmembrane segments spans residues 1–21 (MTLLSFGFSPVFFSVMAFCII), 35–55 (VIVLILLTFFICFLYPLTKVY), and 67–87 (YLFCFISTLIAIAINVVILTI).

The protein belongs to the MceB microcin immunity protein family.

The protein resides in the cell inner membrane. Protect the producing cell against microcin E492. This Klebsiella pneumoniae protein is Microcin E492 immunity protein.